A 304-amino-acid chain; its full sequence is Putative S-adenosyl-L-methionine-dependent methyltransferase Mmcs_1043 (304 aa).

S-adenosyl-L-methionine contacts are provided by residues D130 and 159 to 160; that span reads DL.

The protein belongs to the UPF0677 family.

Its function is as follows. Exhibits S-adenosyl-L-methionine-dependent methyltransferase activity. The protein is Putative S-adenosyl-L-methionine-dependent methyltransferase Mmcs_1043 of Mycobacterium sp. (strain MCS).